The sequence spans 135 residues: HTH-type transcriptional activator AarP (135 aa).

Positions 22–120 constitute an HTH araC/xylS-type domain; sequence SEILVWIEGN…GISPSLYRLS (99 aa). DNA-binding regions (H-T-H motif) lie at residues 39–60 and 87–110; these read DDIA…RKIV and VIDI…KAYL.

Transcriptional activator of 2'-N-acetyltransferase. The sequence is that of HTH-type transcriptional activator AarP (aarP) from Providencia stuartii.